The primary structure comprises 869 residues: Leucine--tRNA ligase (869 aa).

The short motif at 42-52 (PYPSGNLHMGH) is the 'HIGH' region element. Residues 622-626 (KMSKS) carry the 'KMSKS' region motif. K625 serves as a coordination point for ATP.

It belongs to the class-I aminoacyl-tRNA synthetase family.

The protein localises to the cytoplasm. The catalysed reaction is tRNA(Leu) + L-leucine + ATP = L-leucyl-tRNA(Leu) + AMP + diphosphate. This chain is Leucine--tRNA ligase, found in Synechocystis sp. (strain ATCC 27184 / PCC 6803 / Kazusa).